A 343-amino-acid chain; its full sequence is Protein RecA (343 aa).

Position 66-73 (66-73) interacts with ATP; it reads GPESSGKT.

This sequence belongs to the RecA family.

The protein resides in the cytoplasm. Can catalyze the hydrolysis of ATP in the presence of single-stranded DNA, the ATP-dependent uptake of single-stranded DNA by duplex DNA, and the ATP-dependent hybridization of homologous single-stranded DNAs. It interacts with LexA causing its activation and leading to its autocatalytic cleavage. This chain is Protein RecA, found in Rickettsia massiliae (strain Mtu5).